Reading from the N-terminus, the 148-residue chain is 3-dehydroquinate dehydratase (148 aa).

The Proton acceptor role is filled by tyrosine 23. Residues asparagine 75, histidine 81, and aspartate 88 each contribute to the substrate site. Histidine 101 (proton donor) is an active-site residue. Residues 102-103 (LS) and arginine 112 contribute to the substrate site.

Belongs to the type-II 3-dehydroquinase family. As to quaternary structure, homododecamer.

It carries out the reaction 3-dehydroquinate = 3-dehydroshikimate + H2O. Its pathway is metabolic intermediate biosynthesis; chorismate biosynthesis; chorismate from D-erythrose 4-phosphate and phosphoenolpyruvate: step 3/7. Its function is as follows. Catalyzes a trans-dehydration via an enolate intermediate. In Halorhodospira halophila (strain DSM 244 / SL1) (Ectothiorhodospira halophila (strain DSM 244 / SL1)), this protein is 3-dehydroquinate dehydratase.